The sequence spans 430 residues: Gamma-glutamyl phosphate reductase (430 aa).

Belongs to the gamma-glutamyl phosphate reductase family.

The protein localises to the cytoplasm. The enzyme catalyses L-glutamate 5-semialdehyde + phosphate + NADP(+) = L-glutamyl 5-phosphate + NADPH + H(+). Its pathway is amino-acid biosynthesis; L-proline biosynthesis; L-glutamate 5-semialdehyde from L-glutamate: step 2/2. Its function is as follows. Catalyzes the NADPH-dependent reduction of L-glutamate 5-phosphate into L-glutamate 5-semialdehyde and phosphate. The product spontaneously undergoes cyclization to form 1-pyrroline-5-carboxylate. The protein is Gamma-glutamyl phosphate reductase of Rhodopseudomonas palustris (strain BisB5).